The following is a 425-amino-acid chain: Diacetylchitobiose binding protein DasA (425 aa).

Residues 1-20 (MKRKLIAAIGIAGMMVSIAA) form the signal peptide. Cys-21 is lipidated: N-palmitoyl cysteine. Cys-21 carries S-diacylglycerol cysteine lipidation.

Belongs to the bacterial solute-binding protein 1 family. As to quaternary structure, the complex is composed of two ATP-binding proteins (MsiK), two transmembrane proteins (DasB and DasC) and a solute-binding protein (DasA).

Its subcellular location is the cell membrane. Its function is as follows. Part of the ABC transporter complex DasABC-MsiK involved in N,N'-diacetylchitobiose ((GlcNAc)2) uptake. Binds specifically to (GlcNAc)2. Can also bind to GlcNAc, (GlcNAc)3, (GlcNAc)4 and (GlcNAc)5, but it exhibits the highest affinity for (GlcNAc)2. Involved in the control of morphological differentiation. This chain is Diacetylchitobiose binding protein DasA, found in Streptomyces coelicolor (strain ATCC BAA-471 / A3(2) / M145).